A 340-amino-acid chain; its full sequence is Farnesyl pyrophosphate synthase 1 (340 aa).

Isopentenyl diphosphate is bound by residues Lys-47, Arg-50, and Gln-85. Residues Asp-92 and Asp-96 each coordinate Mg(2+). Dimethylallyl diphosphate is bound at residue Arg-101. Arg-102 is an isopentenyl diphosphate binding site. Residues Lys-188, Thr-189, Gln-227, Lys-244, and Lys-253 each contribute to the dimethylallyl diphosphate site.

It belongs to the FPP/GGPP synthase family. Requires Mg(2+) as cofactor. In terms of tissue distribution, mainly expressed in trichomes and flowers, and, to a lower extent, in leaves, roots and stems.

The protein localises to the cytoplasm. It is found in the nucleus. The catalysed reaction is isopentenyl diphosphate + dimethylallyl diphosphate = (2E)-geranyl diphosphate + diphosphate. It carries out the reaction isopentenyl diphosphate + (2E)-geranyl diphosphate = (2E,6E)-farnesyl diphosphate + diphosphate. The protein operates within isoprenoid biosynthesis; farnesyl diphosphate biosynthesis; farnesyl diphosphate from geranyl diphosphate and isopentenyl diphosphate: step 1/1. Its pathway is sesquiterpene biosynthesis. It functions in the pathway isoprenoid biosynthesis; geranyl diphosphate biosynthesis; geranyl diphosphate from dimethylallyl diphosphate and isopentenyl diphosphate: step 1/1. Its function is as follows. Catalyzes the sequential condensation of isopentenyl pyrophosphate with the allylic pyrophosphates, dimethylallyl pyrophosphate, and then with the resultant geranylpyrophosphate to the ultimate product farnesyl pyrophosphate. The protein is Farnesyl pyrophosphate synthase 1 of Cannabis sativa (Hemp).